We begin with the raw amino-acid sequence, 429 residues long: Adenylosuccinate synthetase (429 aa).

GTP contacts are provided by residues 12-18 and 40-42; these read GDEGKGK and GHT. Residue Asp13 is the Proton acceptor of the active site. Positions 13 and 40 each coordinate Mg(2+). IMP-binding positions include 13–16, 38–41, Thr128, Arg142, Gln223, Thr238, and Arg302; these read DEGK and NAGH. Residue His41 is the Proton donor of the active site. Position 298–304 (298–304) interacts with substrate; sequence VNTGRPR. GTP contacts are provided by residues Arg304, 330 to 332, and 412 to 414; these read KLD and GVG.

The protein belongs to the adenylosuccinate synthetase family. In terms of assembly, homodimer. The cofactor is Mg(2+).

It localises to the cytoplasm. The catalysed reaction is IMP + L-aspartate + GTP = N(6)-(1,2-dicarboxyethyl)-AMP + GDP + phosphate + 2 H(+). The protein operates within purine metabolism; AMP biosynthesis via de novo pathway; AMP from IMP: step 1/2. Functionally, plays an important role in the de novo pathway of purine nucleotide biosynthesis. Catalyzes the first committed step in the biosynthesis of AMP from IMP. In Corynebacterium urealyticum (strain ATCC 43042 / DSM 7109), this protein is Adenylosuccinate synthetase.